The sequence spans 590 residues: MNPLGLFLIYLYTCALTPVSGYPNGKVTSACRSMRPDHGHAPQSEPIHSINVEKTIFKPGDRIKVTLSGSRFDGFLVQARDAENLEGSAVGSFSLTDERISQLLTCDGIQNSAVSHTSKERKLQVELFWIAPANSPKHIQFLATVVEKYKIYWVKIPGPIISQPKAPSIAPKIPSSTIPVVPPPSLSLHKRFNSAGCGSSKFCIRNPVSCDPEHNPECFFLSFRKDGQSVLVEMSGPGQGYISFALSHDQWMGDDDAYLCVKEDDGVQINPAYIRGRSHPEVSSMDVLRDVAWRLEDGVIQCSFRRNIQIPIPKERFDLGRSYFIFLADGDAKDGLLYRHHRQPLMTNRKYCITDFPEDVGGSRSPLIIKLHGAMMFIAWMTTVSIGVIIARFFKPVWPTSSLFGEKIWFQIHRCLMITTVFLTVVAFVLPFIYRGYFSKRAGYHPHLGVTVMILTVLQPVLAVFRPPPQTHRRGIFNWTHWATGTAARIIAVAAMFLGMDLQALDLPDPWDTYTMIGFVLWHVFVDLLLEAHGFCLLKKAKTMEEDQIGILNSSPDEAEGHTFKKIVMTVYICGNLAFLITFLAAINQL.

The helical transmembrane segment at Asn-2–Tyr-22 threads the bilayer. The region spanning Tyr-12 to Pro-179 is the Reelin domain. A DOMON domain is found at Glu-217 to Gly-330. The Cytochrome b561 domain maps to Asp-334 to His-533. Residues Leu-371–Ala-391 form a helical membrane-spanning segment. Heme b is bound by residues His-372 and His-413. A run of 2 helical transmembrane segments spans residues Leu-416 to Gly-436 and His-445 to Phe-465. A heme b-binding site is contributed by His-445. N-linked (GlcNAc...) asparagine glycosylation occurs at Asn-478. His-481 contributes to the heme b binding site. Transmembrane regions (helical) follow at residues Trp-482–Leu-502, Ile-517–Leu-537, and Ile-567–Ile-587.

This sequence belongs to the FRRS1 family. Heme b serves as cofactor.

Its subcellular location is the membrane. Its function is as follows. Putative ferric-chelate reductases reduce Fe(3+) to Fe(2+) before its transport from the endosome to the cytoplasm. The sequence is that of Putative ferric-chelate reductase 1 (frrs1) from Xenopus laevis (African clawed frog).